The primary structure comprises 452 residues: Digeranylgeranylglycerophospholipid reductase (452 aa).

FAD contacts are provided by residues 15 to 16 (FA), 35 to 36 (DS), and 45 to 50 (KPCGDA). Residue His-55 coordinates a 2,3-bis-O-phytanyl-sn-glycerol 1-phospholipid. Residues Ala-122 and Asp-288 each contribute to the FAD site. Residue His-297 coordinates a 2,3-bis-O-phytanyl-sn-glycerol 1-phospholipid. 300–301 (GK) lines the FAD pocket. Cys-310 and Cys-335 are disulfide-bonded. Tyr-340 contributes to the a 2,3-bis-O-phytanyl-sn-glycerol 1-phospholipid binding site.

This sequence belongs to the geranylgeranyl reductase family. Monomer. Requires FAD as cofactor.

The catalysed reaction is a 2,3-bis-O-phytanyl-sn-glycerol 1-phospholipid + 8 A = a 2,3-bis-O-(geranylgeranyl)-sn-glycerol 1-phospholipid + 8 AH2. The enzyme catalyses 2,3-bis-O-(phytanyl)-sn-glycerol 1-phosphate + 8 A = 2,3-bis-O-(geranylgeranyl)-sn-glycerol 1-phosphate + 8 AH2. It carries out the reaction sn-3-O-phytanylglycerol 1-phosphate + 4 A = sn-3-O-(geranylgeranyl)glycerol 1-phosphate + 4 AH2. It catalyses the reaction phytyl diphosphate + 3 A = (2E,6E,10E)-geranylgeranyl diphosphate + 3 AH2. It participates in membrane lipid metabolism; glycerophospholipid metabolism. Functionally, is involved in the reduction of 2,3-digeranylgeranylglycerophospholipids (unsaturated archaeols) into 2,3-diphytanylglycerophospholipids (saturated archaeols) in the biosynthesis of archaeal membrane lipids. Catalyzes the formation of archaetidic acid (2,3-di-O-phytanyl-sn-glyceryl phosphate) from 2,3-di-O-geranylgeranylglyceryl phosphate (DGGGP) via the hydrogenation of each double bond of the isoprenoid chains. Is not active with NADPH or NADH as an electron donor; the physiological reducing agent is unknown. Is also active on the more upstream precursors of membrane lipid biosynthesis, catalyzing the complete reduction of 3-O-geranylgeranylglyceryl phosphate (GGGP) to 3-O-phytanylglyceryl phosphate, and the partial reduction of geranylgeranyl diphosphate (GGPP) to phytyl diphosphate, thus reducing three of four GGPP double bonds and preserving the allylic double bond (at position 2). This reaction product is a reactive prenyl donor, which can be used as a substrate by archaeal prenyltransferases such as GGGP synthases. The protein is Digeranylgeranylglycerophospholipid reductase of Sulfolobus acidocaldarius (strain ATCC 33909 / DSM 639 / JCM 8929 / NBRC 15157 / NCIMB 11770).